The primary structure comprises 90 residues: Small ribosomal subunit protein uS15 (90 aa).

The protein belongs to the universal ribosomal protein uS15 family. Part of the 30S ribosomal subunit. Forms a bridge to the 50S subunit in the 70S ribosome, contacting the 23S rRNA.

Functionally, one of the primary rRNA binding proteins, it binds directly to 16S rRNA where it helps nucleate assembly of the platform of the 30S subunit by binding and bridging several RNA helices of the 16S rRNA. Its function is as follows. Forms an intersubunit bridge (bridge B4) with the 23S rRNA of the 50S subunit in the ribosome. The polypeptide is Small ribosomal subunit protein uS15 (Helicobacter acinonychis (strain Sheeba)).